The following is a 400-amino-acid chain: Acetylornithine aminotransferase (400 aa).

Pyridoxal 5'-phosphate-binding positions include 113-114 (GA) and Phe-139. Arg-142 serves as a coordination point for N(2)-acetyl-L-ornithine. 224-227 (DEVQ) lines the pyridoxal 5'-phosphate pocket. At Lys-253 the chain carries N6-(pyridoxal phosphate)lysine. A N(2)-acetyl-L-ornithine-binding site is contributed by Ser-281. Thr-282 contributes to the pyridoxal 5'-phosphate binding site.

Belongs to the class-III pyridoxal-phosphate-dependent aminotransferase family. ArgD subfamily. As to quaternary structure, homodimer. Pyridoxal 5'-phosphate is required as a cofactor.

The protein resides in the cytoplasm. It carries out the reaction N(2)-acetyl-L-ornithine + 2-oxoglutarate = N-acetyl-L-glutamate 5-semialdehyde + L-glutamate. It functions in the pathway amino-acid biosynthesis; L-arginine biosynthesis; N(2)-acetyl-L-ornithine from L-glutamate: step 4/4. This is Acetylornithine aminotransferase from Mycobacterium bovis (strain ATCC BAA-935 / AF2122/97).